Reading from the N-terminus, the 78-residue chain is Large ribosomal subunit protein bL28 (78 aa).

The protein belongs to the bacterial ribosomal protein bL28 family.

The chain is Large ribosomal subunit protein bL28 from Escherichia coli O139:H28 (strain E24377A / ETEC).